A 232-amino-acid polypeptide reads, in one-letter code: Uracil phosphoribosyltransferase (232 aa).

38–42 contributes to the GTP binding site; it reads KGLVR. 5-phospho-alpha-D-ribose 1-diphosphate-binding positions include R87, R112, and 140-148; that span reads DPMIATGST. Uracil contacts are provided by residues I204 and 209 to 211; that span reads GDA. D210 contacts 5-phospho-alpha-D-ribose 1-diphosphate.

Belongs to the UPRTase family. Mg(2+) is required as a cofactor.

It carries out the reaction UMP + diphosphate = 5-phospho-alpha-D-ribose 1-diphosphate + uracil. It functions in the pathway pyrimidine metabolism; UMP biosynthesis via salvage pathway; UMP from uracil: step 1/1. Its activity is regulated as follows. Allosterically activated by GTP. Functionally, catalyzes the conversion of uracil and 5-phospho-alpha-D-ribose 1-diphosphate (PRPP) to UMP and diphosphate. This is Uracil phosphoribosyltransferase from Methanococcus vannielii (strain ATCC 35089 / DSM 1224 / JCM 13029 / OCM 148 / SB).